The chain runs to 156 residues: MNINFTLLAQALAFAGLIWIIATKIWPPLMNAIEERQQKIAEGLAAADRSQKDLAQAQEKVNEALKEARTKANEIIDQAHARANQIVDAARNEAITEATRQKELAQAEIDAAANRAREDLRKQVSALAVTGAEKLLKREIDANAHKALLDELASEI.

Residues Ile-3–Thr-23 traverse the membrane as a helical segment.

This sequence belongs to the ATPase B chain family. F-type ATPases have 2 components, F(1) - the catalytic core - and F(0) - the membrane proton channel. F(1) has five subunits: alpha(3), beta(3), gamma(1), delta(1), epsilon(1). F(0) has three main subunits: a(1), b(2) and c(10-14). The alpha and beta chains form an alternating ring which encloses part of the gamma chain. F(1) is attached to F(0) by a central stalk formed by the gamma and epsilon chains, while a peripheral stalk is formed by the delta and b chains.

It is found in the cell membrane. In terms of biological role, f(1)F(0) ATP synthase produces ATP from ADP in the presence of a proton or sodium gradient. F-type ATPases consist of two structural domains, F(1) containing the extramembraneous catalytic core and F(0) containing the membrane proton channel, linked together by a central stalk and a peripheral stalk. During catalysis, ATP synthesis in the catalytic domain of F(1) is coupled via a rotary mechanism of the central stalk subunits to proton translocation. Component of the F(0) channel, it forms part of the peripheral stalk, linking F(1) to F(0). This Stenotrophomonas maltophilia (strain K279a) protein is ATP synthase subunit b.